The sequence spans 172 residues: Cold-inducible RNA-binding protein (172 aa).

An RRM domain is found at 6 to 84 (GKLFVGGLSF…RQIRVDQAGK (79 aa)). The interval 70–172 (KSVDGRQIRV…SYDSYATHNE (103 aa)) is disordered. Gly residues-rich tracts occupy residues 93–105 (YRGG…GFFR) and 114–137 (FSRG…GYGG). 6 positions are modified to phosphoserine: S130, S138, S146, S156, S159, and S163. The span at 138-172 (SRDYYASRSQGGSYGYRSSGGSYRDSYDSYATHNE) shows a compositional bias: low complexity.

As to quaternary structure, interacts with EIF4G1. Associates with ribosomes. Methylated on arginine residues. Methylation of the RGG motifs is a prerequisite for recruitment into SGs. In terms of processing, phosphorylated by CK2, GSK3A and GSK3B. Phosphorylation by GSK3B increases RNA-binding activity to the TXN 3'-UTR transcript upon exposure to UV radiation. As to expression, ubiquitous.

It localises to the nucleus. Its subcellular location is the nucleoplasm. The protein resides in the cytoplasm. Cold-inducible mRNA binding protein that plays a protective role in the genotoxic stress response by stabilizing transcripts of genes involved in cell survival. Promotes assembly of stress granules (SGs), when overexpressed. Seems to play an essential role in cold-induced suppression of cell proliferation. Acts as a translational repressor. Acts as a translational activator. Binds specifically to the 3'-untranslated regions (3'-UTRs) of stress-responsive transcripts RPA2 and TXN. The sequence is that of Cold-inducible RNA-binding protein (Cirbp) from Mus musculus (Mouse).